Here is a 3567-residue protein sequence, read N- to C-terminus: Sushi, von Willebrand factor type A, EGF and pentraxin domain-containing protein 1 (3567 aa).

A signal peptide spans 1 to 17; the sequence is MWSRLAFCCWALALVSG. Positions 84-265 constitute a VWFA domain; it reads ELVFLVDESS…LARRALHEDL (182 aa). A glycan (N-linked (GlcNAc...) asparagine) is linked at Asn-187. 3 Sushi domains span residues 377 to 436, 437 to 496, and 497 to 561; these read VHCP…FCRV, RTCP…RCVE, and RHCA…VCKD. Intrachain disulfides connect Cys-379/Cys-421, Cys-407/Cys-434, Cys-439/Cys-481, Cys-467/Cys-494, Cys-499/Cys-544, and Cys-530/Cys-559. 2 consecutive HYR domains span residues 560-644 and 645-724; these read KDVE…KVID and VEPP…VIKG. The Sushi 4 domain maps to 725–789; it reads SPCEVPFTPV…YSTEWPDCAI (65 aa). Cystine bridges form between Cys-727-Cys-769, Cys-753-Cys-787, Cys-1196-Cys-1207, Cys-1201-Cys-1216, Cys-1218-Cys-1227, Cys-1234-Cys-1245, Cys-1239-Cys-1254, Cys-1256-Cys-1265, Cys-1272-Cys-1283, Cys-1277-Cys-1292, Cys-1294-Cys-1303, Cys-1310-Cys-1321, Cys-1315-Cys-1330, Cys-1332-Cys-1341, Cys-1348-Cys-1359, Cys-1353-Cys-1368, Cys-1370-Cys-1379, Cys-1386-Cys-1397, Cys-1391-Cys-1406, and Cys-1408-Cys-1417. The region spanning 1192–1228 is the EGF-like 1 domain; sequence VFHECFLNPCHNSGTCQQLGRGYVCLCPPGYTGLKCE. The EGF-like 2; calcium-binding domain occupies 1230–1266; that stretch reads DIDECSSLPCLNGGICRDQVGGFTCECSLGYSGQICE. The 37-residue stretch at 1268–1304 folds into the EGF-like 3; calcium-binding domain; that stretch reads NINECISSPCLNKGTCTDGLASYRCTCVKGYMGVHCE. Positions 1306 to 1342 constitute an EGF-like 4; calcium-binding domain; sequence DVNECQSSPCLNNAVCKDQVGGFSCKCPPGFLGTRCE. The region spanning 1344–1380 is the EGF-like 5; calcium-binding domain; sequence NVDECLSQPCQNGATCKDGANSFRCQCPAGFTGTHCE. The 37-residue stretch at 1382 to 1418 folds into the EGF-like 6; calcium-binding domain; that stretch reads NINECQSNPCRNQATCVDELNSYSCKCQPGFSGHRCE. In terms of domain architecture, Pentraxin (PTX) spans 1423 to 1627; sequence SGFNLDFEVS…VKVDSSSMFC (205 aa). Sushi domains lie at 1628 to 1686 and 1687 to 1744; these read SDCP…HCER and IRCG…SCLD. 35 disulfides stabilise this stretch: Cys-1630/Cys-1671, Cys-1657/Cys-1684, Cys-1689/Cys-1729, Cys-1715/Cys-1742, Cys-1748/Cys-1760, Cys-1754/Cys-1769, Cys-1771/Cys-1782, Cys-1788/Cys-1828, Cys-1814/Cys-1841, Cys-1846/Cys-1886, Cys-1872/Cys-1899, Cys-1904/Cys-1944, Cys-1930/Cys-1957, Cys-1962/Cys-2002, Cys-1988/Cys-2015, Cys-2020/Cys-2060, Cys-2046/Cys-2077, Cys-2082/Cys-2125, Cys-2111/Cys-2140, Cys-2145/Cys-2185, Cys-2171/Cys-2198, Cys-2203/Cys-2244, Cys-2230/Cys-2258, Cys-2263/Cys-2303, Cys-2289/Cys-2317, Cys-2322/Cys-2362, Cys-2348/Cys-2375, Cys-2380/Cys-2421, Cys-2407/Cys-2434, Cys-2439/Cys-2479, Cys-2465/Cys-2492, Cys-2497/Cys-2537, Cys-2523/Cys-2550, Cys-2555/Cys-2595, and Cys-2581/Cys-2607. The EGF-like 7; calcium-binding domain maps to 1744-1783; the sequence is DVDECAVGSDCSEHASCLNTNGSYVCSCNPPYTGDGKNCA. 14 Sushi domains span residues 1780-1843, 1844-1901, 1902-1959, 1960-2017, 2018-2079, 2080-2142, 2143-2200, 2201-2260, 2261-2319, 2320-2377, 2378-2436, 2437-2494, 2495-2552, and 2553-2609; these read KNCA…SCEA, ISCG…VCEL, VKCS…SCQL, VSCG…QCLA, VSCD…RCIA, HFCE…QCIP, VRCG…TCHP, VSCN…SCTP, LNCG…KCVP, TKCA…ICKM, VLCP…ECVP, VECP…MCKP, IECP…SCDA, and IHCS…TCVP. The interval 2638–2645 is important for the interaction with integrin ITGA9:ITGB1; it reads DMMEVPYL. 14 consecutive Sushi domains span residues 2660–2711, 2712–2769, 2770–2827, 2828–2885, 2886–2943, 2944–3001, 3002–3057, 3058–3115, 3116–3174, 3175–3234, 3235–3292, 3293–3350, 3351–3409, and 3410–3466; these read NTKE…SCIS, IECD…RCEA, ISCS…MCIP, VDCG…SCMP, VRCP…VCKP, ATCG…SCLP, CRCS…LCEH, AQCG…TCEP, LSCG…TCSP, KKCP…SCIP, VVCG…VCRE, NRCE…LCKP, NPCP…RCEK, and ISCG…VCRA. 33 disulfide bridges follow: Cys-2682–Cys-2709, Cys-2714–Cys-2754, Cys-2740–Cys-2767, Cys-2772–Cys-2812, Cys-2798–Cys-2825, Cys-2830–Cys-2870, Cys-2856–Cys-2883, Cys-2888–Cys-2928, Cys-2914–Cys-2941, Cys-2946–Cys-2986, Cys-2972–Cys-2999, Cys-3004–Cys-3043, Cys-3029–Cys-3055, Cys-3060–Cys-3100, Cys-3086–Cys-3113, Cys-3118–Cys-3159, Cys-3144–Cys-3172, Cys-3177–Cys-3217, Cys-3203–Cys-3232, Cys-3237–Cys-3277, Cys-3263–Cys-3290, Cys-3295–Cys-3335, Cys-3321–Cys-3348, Cys-3353–Cys-3394, Cys-3380–Cys-3407, Cys-3412–Cys-3452, Cys-3438–Cys-3464, Cys-3500–Cys-3510, Cys-3504–Cys-3516, Cys-3518–Cys-3527, Cys-3532–Cys-3542, Cys-3536–Cys-3548, and Cys-3550–Cys-3559. 2 consecutive EGF-like domains span residues 3496 to 3528 and 3529 to 3560; these read EEPICILPCLNGGRCVAPYQCDCPTGWTGSRCH and TATCQSPCLNGGKCIRPNRCHCLSAWTGHDCS.

Interacts (via Sushi domain 21) with ITGA9:ITGB1; thereby inhibits Ca(2+) intracellular signaling and as a result represses vasocontraction. Interacts (via Sushi domain 21) with ITGA4:ITGB1; thereby inhibits Ca(2+) intracellular signaling and as a result represses vasocontraction. Interacts with ANGPT1 and ANGPT2. Interacts with PEAR1 (via extracellular domain). Interacts with HSPG2, TLN1, FN1, COPA, CCT2, IQGAP1, LAMC1 and NID1. Interacts (via C-terminus) with TIE1. Expressed in the media layer of the arterial wall (at protein level). Highly expressed in lung and placenta, weakly expressed in the kidney, heart, brain and spleen. Also expressed in bone and periosteum, but not in cartilage and skeletal muscle.

The protein localises to the secreted. The protein resides in the nucleus. It localises to the cytoplasm. Its subcellular location is the membrane. Its function is as follows. Required for morphological development, cell alignment and migration of lymphatic endothelial cells during embryonic development, potentially via modulation of ANGPT2-TIE1 signaling and subsequent activation of FOXC2 transcription. Required for embryonic lymphatic vascular development, via mediating the correct formation of the first lymphovenous contact site and tight association of the lymphatic endothelium with the venous endothelium. Represses PRKCA-mediated L-type voltage-gated channel Ca(2+) influx and ROCK-mediated calcium sensitivity in vascular smooth muscle cells, via its interaction with integrins, thereby inhibiting vasocontraction. Promotes platelet activation, via its interaction with PEAR1 and subsequent activation of AKT/mTOR signaling. Plays a role in epidermal development and keratinocyte differentiation, independent of cell-cell adhesion. May play a role in initial cell attachment of stromal osteogenic cells. May promote myoblast cell adhesion when in the presence of integrin ITGA9:ITGB1. In Mus musculus (Mouse), this protein is Sushi, von Willebrand factor type A, EGF and pentraxin domain-containing protein 1 (Svep1).